An 87-amino-acid polypeptide reads, in one-letter code: Small ribosomal subunit protein uS17 (87 aa).

This sequence belongs to the universal ribosomal protein uS17 family. Part of the 30S ribosomal subunit.

In terms of biological role, one of the primary rRNA binding proteins, it binds specifically to the 5'-end of 16S ribosomal RNA. The chain is Small ribosomal subunit protein uS17 from Aster yellows witches'-broom phytoplasma (strain AYWB).